An 890-amino-acid polypeptide reads, in one-letter code: Translation initiation factor IF-2 (890 aa).

The interval 45–304 is disordered; it reads LIDHLNQKNS…LQQGFQKPAQ (260 aa). Residues 67–81 show a composition bias toward polar residues; it reads STLNIPGTGGKSKSV. Basic and acidic residues predominate over residues 92–217; that stretch reads VKRDPQEAER…RMAEENKWID (126 aa). The segment covering 252 to 266 has biased composition (basic residues); the sequence is GRGRNAKAARPKKGN. A compositionally biased stretch (basic and acidic residues) spans 267–280; the sequence is KHAESKADREEARA. In terms of domain architecture, tr-type G spans 389–558; that stretch reads PRAPVVTIMG…LLQAEVLELK (170 aa). The interval 398 to 405 is G1; sequence GHVDHGKT. 398 to 405 provides a ligand contact to GTP; it reads GHVDHGKT. The tract at residues 423–427 is G2; the sequence is GITQH. A G3 region spans residues 444–447; that stretch reads DTPG. Residues 444–448 and 498–501 contribute to the GTP site; these read DTPGH and NKID. The tract at residues 498–501 is G4; it reads NKID. The tract at residues 534–536 is G5; that stretch reads SAK. K808 is subject to N6-acetyllysine.

The protein belongs to the TRAFAC class translation factor GTPase superfamily. Classic translation factor GTPase family. IF-2 subfamily.

The protein localises to the cytoplasm. Its function is as follows. One of the essential components for the initiation of protein synthesis. Protects formylmethionyl-tRNA from spontaneous hydrolysis and promotes its binding to the 30S ribosomal subunits. Also involved in the hydrolysis of GTP during the formation of the 70S ribosomal complex. The polypeptide is Translation initiation factor IF-2 (Escherichia coli O81 (strain ED1a)).